A 343-amino-acid chain; its full sequence is Transmembrane protein 82 (343 aa).

8 helical membrane-spanning segments follow: residues 30–50 (GLIG…YFFV), 77–97 (LAGL…LVVL), 121–141 (LQLY…GLSF), 145–167 (GAPH…GLGA), 203–223 (LLGR…VALI), 233–252 (AMRF…IYMQ), 263–283 (SQVQ…LTVG), and 285–305 (WLDL…LVGV). Pro residues predominate over residues 320–333 (QRPPVSTPSQPLPS). Positions 320–343 (QRPPVSTPSQPLPSAPQSQSSAPS) are disordered. Over residues 334 to 343 (APQSQSSAPS) the composition is skewed to low complexity.

It belongs to the TMEM82 family.

Its subcellular location is the membrane. The sequence is that of Transmembrane protein 82 (TMEM82) from Homo sapiens (Human).